The chain runs to 137 residues: Large ribosomal subunit protein uL16 (137 aa).

Over residues 1 to 17 (MLQPKRTKFRKTHKGRN) the composition is skewed to basic residues. Residues 1 to 23 (MLQPKRTKFRKTHKGRNRGLAQN) are disordered.

The protein belongs to the universal ribosomal protein uL16 family. As to quaternary structure, part of the 50S ribosomal subunit.

Its function is as follows. Binds 23S rRNA and is also seen to make contacts with the A and possibly P site tRNAs. This is Large ribosomal subunit protein uL16 from Pseudoalteromonas translucida (strain TAC 125).